The chain runs to 150 residues: UPF0208 membrane protein VV1_2222 (150 aa).

The next 2 membrane-spanning stretches (helical) occupy residues phenylalanine 42 to asparagine 62 and alanine 70 to histidine 90.

The protein belongs to the UPF0208 family.

The protein resides in the cell inner membrane. The chain is UPF0208 membrane protein VV1_2222 from Vibrio vulnificus (strain CMCP6).